Consider the following 114-residue polypeptide: UPF0102 protein HP_0823 (114 aa).

It belongs to the UPF0102 family.

The chain is UPF0102 protein HP_0823 from Helicobacter pylori (strain ATCC 700392 / 26695) (Campylobacter pylori).